We begin with the raw amino-acid sequence, 111 residues long: SPbeta prophage-derived uncharacterized protein YolC (111 aa).

The first 25 residues, 1–25, serve as a signal peptide directing secretion; sequence MKKRLIGFLVLVPALIMSGITLIEA.

This chain is SPbeta prophage-derived uncharacterized protein YolC (yolC), found in Bacillus subtilis (strain 168).